Reading from the N-terminus, the 99-residue chain is MASVNIKPLEDKILVQANEAETTTASGLVIPDTAKEKPQEGTVVAVGEGRVNEQGNRIPVDVKEGDTVIYSKYGGTEIKYAGQEYLILSARDVLAVVSK.

This sequence belongs to the GroES chaperonin family. In terms of assembly, heptamer of 7 subunits arranged in a ring. Interacts with the chaperonin GroEL.

The protein localises to the cytoplasm. Functionally, together with the chaperonin GroEL, plays an essential role in assisting protein folding. The GroEL-GroES system forms a nano-cage that allows encapsulation of the non-native substrate proteins and provides a physical environment optimized to promote and accelerate protein folding. GroES binds to the apical surface of the GroEL ring, thereby capping the opening of the GroEL channel. This chain is Co-chaperonin GroES, found in Rhodococcus erythropolis (strain PR4 / NBRC 100887).